A 252-amino-acid polypeptide reads, in one-letter code: Small ribosomal subunit protein eS4 (252 aa).

Residues Leu43–Pro106 enclose the S4 RNA-binding domain.

Belongs to the eukaryotic ribosomal protein eS4 family.

The sequence is that of Small ribosomal subunit protein eS4 from Desulfurococcus amylolyticus (strain DSM 18924 / JCM 16383 / VKM B-2413 / 1221n) (Desulfurococcus kamchatkensis).